The chain runs to 330 residues: Phenylalanine--tRNA ligase alpha subunit (330 aa).

E246 lines the Mg(2+) pocket.

This sequence belongs to the class-II aminoacyl-tRNA synthetase family. Phe-tRNA synthetase alpha subunit type 1 subfamily. Tetramer of two alpha and two beta subunits. The cofactor is Mg(2+).

The protein localises to the cytoplasm. The catalysed reaction is tRNA(Phe) + L-phenylalanine + ATP = L-phenylalanyl-tRNA(Phe) + AMP + diphosphate + H(+). The polypeptide is Phenylalanine--tRNA ligase alpha subunit (Campylobacter jejuni subsp. jejuni serotype O:6 (strain 81116 / NCTC 11828)).